Consider the following 152-residue polypeptide: MDERNDSARSEAMFEARHEGRYRRVEVITGPVRRRNWTDEEKALMLAESAEPDANISAIARRFGVNRGLLNTWRRAAGQIGPVLGEPALEQPAFVPIRIADDQNEHQADEAGIAEGAAGRIEIELGGGRMIVTGNVSPDLAHAVVMALRGRR.

Belongs to the transposase 8 family.

This is an uncharacterized protein from Sinorhizobium fredii (strain NBRC 101917 / NGR234).